A 367-amino-acid polypeptide reads, in one-letter code: DNA replication and repair protein RecF (367 aa).

30-37 (GNNAQGKT) contributes to the ATP binding site.

This sequence belongs to the RecF family.

Its subcellular location is the cytoplasm. The RecF protein is involved in DNA metabolism; it is required for DNA replication and normal SOS inducibility. RecF binds preferentially to single-stranded, linear DNA. It also seems to bind ATP. In Clostridium tetani (strain Massachusetts / E88), this protein is DNA replication and repair protein RecF.